The primary structure comprises 273 residues: HMP-PP phosphatase (273 aa).

The Nucleophile role is filled by aspartate 8. Mg(2+) is bound by residues aspartate 8, aspartate 10, and aspartate 212.

The protein belongs to the HAD-like hydrolase superfamily. Cof family. The cofactor is Mg(2+).

It carries out the reaction 4-amino-2-methyl-5-(diphosphooxymethyl)pyrimidine + H2O = 4-amino-2-methyl-5-(phosphooxymethyl)pyrimidine + phosphate + H(+). Catalyzes the hydrolysis of 4-amino-2-methyl-5-hydroxymethylpyrimidine pyrophosphate (HMP-PP) to 4-amino-2-methyl-5-hydroxymethylpyrimidine phosphate (HMP-P). This Yersinia pestis bv. Antiqua (strain Antiqua) protein is HMP-PP phosphatase.